Here is a 249-residue protein sequence, read N- to C-terminus: Small ribosomal subunit protein eS6 (249 aa).

Positions 223–238 (LRQRDHSKKHTQKVHA) are enriched in basic residues. The tract at residues 223 to 249 (LRQRDHSKKHTQKVHAQRAEVAAFQKK) is disordered.

It belongs to the eukaryotic ribosomal protein eS6 family. In terms of assembly, component of the small ribosomal subunit. Part of the small subunit (SSU) processome, composed of more than 70 proteins and the RNA chaperone small nucleolar RNA (snoRNA) U3. Post-translationally, ribosomal protein S6 is the major substrate of protein kinases in eukaryote ribosomes.

Its subcellular location is the cytoplasm. The protein localises to the nucleus. The protein resides in the nucleolus. Its function is as follows. Component of the 40S small ribosomal subunit. Plays an important role in controlling cell growth and proliferation through the selective translation of particular classes of mRNA. Part of the small subunit (SSU) processome, first precursor of the small eukaryotic ribosomal subunit. During the assembly of the SSU processome in the nucleolus, many ribosome biogenesis factors, an RNA chaperone and ribosomal proteins associate with the nascent pre-rRNA and work in concert to generate RNA folding, modifications, rearrangements and cleavage as well as targeted degradation of pre-ribosomal RNA by the RNA exosome. This Leishmania infantum protein is Small ribosomal subunit protein eS6 (RPS6).